Consider the following 521-residue polypeptide: Probable glycine dehydrogenase (decarboxylating) subunit 2 (521 aa).

Position 279 is an N6-(pyridoxal phosphate)lysine (Lys-279).

Belongs to the GcvP family. C-terminal subunit subfamily. In terms of assembly, the glycine cleavage system is composed of four proteins: P, T, L and H. In this organism, the P 'protein' is a heterodimer of two subunits. The cofactor is pyridoxal 5'-phosphate.

It carries out the reaction N(6)-[(R)-lipoyl]-L-lysyl-[glycine-cleavage complex H protein] + glycine + H(+) = N(6)-[(R)-S(8)-aminomethyldihydrolipoyl]-L-lysyl-[glycine-cleavage complex H protein] + CO2. The glycine cleavage system catalyzes the degradation of glycine. The P protein binds the alpha-amino group of glycine through its pyridoxal phosphate cofactor; CO(2) is released and the remaining methylamine moiety is then transferred to the lipoamide cofactor of the H protein. The sequence is that of Probable glycine dehydrogenase (decarboxylating) subunit 2 from Staphylothermus marinus (strain ATCC 43588 / DSM 3639 / JCM 9404 / F1).